Consider the following 342-residue polypeptide: S-adenosylmethionine:tRNA ribosyltransferase-isomerase (342 aa).

Belongs to the QueA family. Monomer.

It is found in the cytoplasm. It carries out the reaction 7-aminomethyl-7-carbaguanosine(34) in tRNA + S-adenosyl-L-methionine = epoxyqueuosine(34) in tRNA + adenine + L-methionine + 2 H(+). The protein operates within tRNA modification; tRNA-queuosine biosynthesis. Transfers and isomerizes the ribose moiety from AdoMet to the 7-aminomethyl group of 7-deazaguanine (preQ1-tRNA) to give epoxyqueuosine (oQ-tRNA). This Bacillus subtilis (strain 168) protein is S-adenosylmethionine:tRNA ribosyltransferase-isomerase.